Reading from the N-terminus, the 134-residue chain is Phosphoribosyl-AMP cyclohydrolase (134 aa).

Residue Asp77 coordinates Mg(2+). Zn(2+) is bound at residue Cys78. The Mg(2+) site is built by Asp79 and Asp81. Zn(2+) contacts are provided by Cys95 and Cys102.

It belongs to the PRA-CH family. As to quaternary structure, homodimer. Mg(2+) serves as cofactor. Requires Zn(2+) as cofactor.

It is found in the cytoplasm. It catalyses the reaction 1-(5-phospho-beta-D-ribosyl)-5'-AMP + H2O = 1-(5-phospho-beta-D-ribosyl)-5-[(5-phospho-beta-D-ribosylamino)methylideneamino]imidazole-4-carboxamide. Its pathway is amino-acid biosynthesis; L-histidine biosynthesis; L-histidine from 5-phospho-alpha-D-ribose 1-diphosphate: step 3/9. In terms of biological role, catalyzes the hydrolysis of the adenine ring of phosphoribosyl-AMP. In Pseudomonas aeruginosa (strain UCBPP-PA14), this protein is Phosphoribosyl-AMP cyclohydrolase.